A 309-amino-acid polypeptide reads, in one-letter code: 1,2-phenylacetyl-CoA epoxidase, subunit A (309 aa).

Substrate contacts are provided by residues arginine 33, glutamine 37, 103-106, asparagine 132, methionine 193, 202-204, lysine 214, and asparagine 218; these read KYSS and SPN.

Forms a stable heterotetramer (dimer of heterodimers) with PaaC. Fe cation serves as cofactor.

The enzyme catalyses phenylacetyl-CoA + NADPH + O2 + H(+) = 2-(1,2-epoxy-1,2-dihydrophenyl)acetyl-CoA + NADP(+) + H2O. The protein operates within aromatic compound metabolism; phenylacetate degradation. Component of 1,2-phenylacetyl-CoA epoxidase multicomponent enzyme system which catalyzes the reduction of phenylacetyl-CoA (PA-CoA) to form 1,2-epoxyphenylacetyl-CoA. The subunit A is the catalytic subunit involved in the incorporation of one atom of molecular oxygen into phenylacetyl-CoA. The polypeptide is 1,2-phenylacetyl-CoA epoxidase, subunit A (paaA) (Escherichia coli (strain K12)).